Consider the following 560-residue polypeptide: Serine/threonine-protein kinase TOS3 (560 aa).

A Protein kinase domain is found at 50 to 344; sequence FEILATLGNG…LADIKVHPFM (295 aa). ATP is bound by residues 56–64 and lysine 79; that span reads LGNGQYGKV. Aspartate 189 functions as the Proton acceptor in the catalytic mechanism.

This sequence belongs to the protein kinase superfamily. Ser/Thr protein kinase family. Post-translationally, autophosphorylated.

It carries out the reaction L-seryl-[protein] + ATP = O-phospho-L-seryl-[protein] + ADP + H(+). It catalyses the reaction L-threonyl-[protein] + ATP = O-phospho-L-threonyl-[protein] + ADP + H(+). One of the three SNF1 protein kinases (with SAK1 and ELM1) which are required for growth on nonfermentable carbon sources and nonpreferred sugars and for response to environmental stress. Activates SNF1 by phosphorylation of its activation-loop 'Thr-210'. Required for the regulation by SNF1 of the transcription of a large set of genes, the modification the activity of metabolic enzymes, and the control of various nutrient-responsive cellular developmental processes. Also phosphorylates GAL83, MIG1 and SIP2. This Saccharomyces cerevisiae (strain ATCC 204508 / S288c) (Baker's yeast) protein is Serine/threonine-protein kinase TOS3 (TOS3).